A 356-amino-acid chain; its full sequence is UDP-N-acetylglucosamine--N-acetylmuramyl-(pentapeptide) pyrophosphoryl-undecaprenol N-acetylglucosamine transferase (356 aa).

Residues 12–14 (TGG), N124, R163, S188, I242, and Q287 each bind UDP-N-acetyl-alpha-D-glucosamine.

It belongs to the glycosyltransferase 28 family. MurG subfamily.

The protein localises to the cell inner membrane. The enzyme catalyses di-trans,octa-cis-undecaprenyl diphospho-N-acetyl-alpha-D-muramoyl-L-alanyl-D-glutamyl-meso-2,6-diaminopimeloyl-D-alanyl-D-alanine + UDP-N-acetyl-alpha-D-glucosamine = di-trans,octa-cis-undecaprenyl diphospho-[N-acetyl-alpha-D-glucosaminyl-(1-&gt;4)]-N-acetyl-alpha-D-muramoyl-L-alanyl-D-glutamyl-meso-2,6-diaminopimeloyl-D-alanyl-D-alanine + UDP + H(+). Its pathway is cell wall biogenesis; peptidoglycan biosynthesis. Its function is as follows. Cell wall formation. Catalyzes the transfer of a GlcNAc subunit on undecaprenyl-pyrophosphoryl-MurNAc-pentapeptide (lipid intermediate I) to form undecaprenyl-pyrophosphoryl-MurNAc-(pentapeptide)GlcNAc (lipid intermediate II). This Pseudomonas fluorescens (strain Pf0-1) protein is UDP-N-acetylglucosamine--N-acetylmuramyl-(pentapeptide) pyrophosphoryl-undecaprenol N-acetylglucosamine transferase.